The following is a 478-amino-acid chain: Antiviral innate immune response effector IFIT1 (478 aa).

TPR repeat units follow at residues 52 to 85 (VGIHNLLAYVKHLKGQNEEALKSLKEAENLMQEE), 95 to 128 (LVTWGNFAWMYYHMGRLAEAQTYLDKVENICKKL), 141 to 174 (IDCEEGWALLKCGGKNYERAKACFEKVLEVDPEN), 183 to 216 (ISAYRLDGFKLATKNHKPFSLLPLRQAVRLNPDN), 218 to 249 (YIKVLLALKLQDEGQEAEGEKYIEEALANMSS), and 251 to 284 (TYVFRYAAKFYRRKGSVDKALELLKKALQETPTS). Position 147 (W147) interacts with mRNA. G190 provides a ligand contact to RNA. Positions 259, 289, 290, and 336 each coordinate RNA. 4 TPR repeats span residues 305–339 (ATKGQPRGQNREKLDKMIRSAIFHFESAVEKKPTF), 340–373 (EVAHLDLARMYIEAGNHRKAEENFQKLLCMKPVV), 378–412 (QDIHFHYGRFQEFQKKSDVNAIIHYLKAIKIEQAS), and 437–470 (LESLSLLGFVYKLEGNMNEALEYYERALRLAADF).

The protein belongs to the IFIT family. In terms of assembly, component of an interferon-dependent multiprotein complex, at least composed of IFIT1, IFIT2 and IFIT3. Interacts (via TPR repeats 1-4) with RPL15. Interacts with STING1/MITA; could disrupt STING1 interaction with MAVS or TBK1, acting as a negative-feedback regulator of virus-triggered signaling. Interacts with EIF3E; this could be an alternative way to inhibit translation. Phosphorylated. In terms of processing, ISGylated.

The protein localises to the cytoplasm. Its function is as follows. Plays a key role in the innate immune response as part of an interferon-dependent multiprotein complex, recognizing and sequestering viral RNAs that lack host-specific 2'-O-methylation at their 5' cap. By distinguishing these RNAs from host mRNAs, inhibits their translation by competing with the translation initiation factor eIF4E. Could also prevent viral replication through its interaction with DNA replication origin-binding protein E1 of several viruses. Causes the translocation of E1 from the nucleus to the cytoplasm and can also inhibit its helicase activity in vitro. Exhibits antiviral activity against many viruses from the Flaviviridae (West Nile virus, Dengue virus, hepatitis C virus), Coronaviridae (human 229E coronavirus, SARS-CoV-2 and SARS-CoV), Poxviridae (vaccinia virus) and Togaviridae (Sindbis virus) families. The sequence is that of Antiviral innate immune response effector IFIT1 from Homo sapiens (Human).